The primary structure comprises 140 residues: Large ribosomal subunit protein uL13 (140 aa).

Part of the 50S ribosomal subunit.

Its function is as follows. This protein is one of the early assembly proteins of the 50S ribosomal subunit, although it is not seen to bind rRNA by itself. It is important during the early stages of 50S assembly. This is Large ribosomal subunit protein uL13 from Thermus thermophilus (strain ATCC 27634 / DSM 579 / HB8).